The sequence spans 481 residues: Protein FIZZY-RELATED 3 (481 aa).

Positions 100-165 (PAGGQGSASS…RKVPKTPHKV (66 aa)) are disordered. Residues 125 to 136 (SNSSPSSPFSPS) are compositionally biased toward low complexity. Over residues 154–163 (PPRKVPKTPH) the composition is skewed to basic residues. WD repeat units follow at residues 172-209 (QDDF…VTKL), 213-252 (GPND…RVRT), 255-292 (GHQT…DFVS), 296-335 (GHKS…PILK), 338-380 (EHTA…QLNS), 382-423 (DTGS…KVAT), and 426-465 (GHSM…KMQT).

It belongs to the WD repeat CDC20/Fizzy family. As to quaternary structure, associates with the APC/C complex. Interacts with CDC20-1, CDC20-2, CYCA1-1, CYCA3-4, CYCB1-1 and CYCB1-2. Binds to GIG1 and PYM.

Its pathway is protein modification; protein ubiquitination. Activator protein that regulates the ubiquitin ligase activity and substrate specificity of the anaphase promoting complex/cyclosome (APC/C). This Arabidopsis thaliana (Mouse-ear cress) protein is Protein FIZZY-RELATED 3 (FZR3).